The primary structure comprises 130 residues: Glycine cleavage system H protein (130 aa).

A Lipoyl-binding domain is found at 24-106 (IYSVGITEHA…YADGWLFRIR (83 aa)). Lysine 65 bears the N6-lipoyllysine mark.

The protein belongs to the GcvH family. As to quaternary structure, the glycine cleavage system is composed of four proteins: P, T, L and H. The cofactor is (R)-lipoate.

Its function is as follows. The glycine cleavage system catalyzes the degradation of glycine. The H protein shuttles the methylamine group of glycine from the P protein to the T protein. The chain is Glycine cleavage system H protein from Pectobacterium carotovorum subsp. carotovorum (strain PC1).